The following is a 238-amino-acid chain: E3 ubiquitin-protein ligase ZNRF2 (238 aa).

The interval 1–137 (MGAKQSGPAA…AGGGPGGPRL (137 aa)) is disordered. Gly-2 is lipidated: N-myristoyl glycine. Phosphoserine occurs at positions 20, 24, 75, 82, 107, 110, 141, 147, and 189. Residues 35–77 (GARAARFAAPVSGAQQPSASAGAAAAAAAAASAPAAPRSRSLG) are compositionally biased toward low complexity. The segment at 195 to 236 (CAICLEELQQGDTIARLPCLCIYHKGCIDEWFEVNRSCPEHP) adopts an RING-type; atypical zinc-finger fold.

As to quaternary structure, interacts with UBE2N. Interacts with ZNRF1. Interacts (when phosphorylated) with YWHAE. Phosphorylated; leading to binding to YWHAE. Phosphorylated by MTOR at Ser-147 and dephosphorylated by PP6C. Ser-147 phosphorylation stimulates vesicle-to-cytosol translocation. In terms of tissue distribution, expressed primarily in the nervous system. Expression is more intense in the granular cell layer of hippocampus, Purkinje cell layer of the cerebellum and the granular cell layer of the olfactory bulb. Detected in sensory neurons but not expressed in sympatic or enteric neurons. Expressed in testis, adipose tissue, columnar epithelial cells of the gut.

It is found in the endosome membrane. Its subcellular location is the lysosome membrane. It localises to the presynaptic cell membrane. The protein resides in the cytoplasm. It carries out the reaction S-ubiquitinyl-[E2 ubiquitin-conjugating enzyme]-L-cysteine + [acceptor protein]-L-lysine = [E2 ubiquitin-conjugating enzyme]-L-cysteine + N(6)-ubiquitinyl-[acceptor protein]-L-lysine.. It functions in the pathway protein modification; protein ubiquitination. Functionally, E3 ubiquitin-protein ligase that plays a role in the establishment and maintenance of neuronal transmission and plasticity. Ubiquitinates the Na(+)/K(+) ATPase alpha-1 subunit/ATP1A1 and thereby influences its endocytosis and/or degradation. Also acts as a positive regulator of mTORC1 activation by amino acids, which functions upstream of the V-ATPase and of Rag-GTPases. In turn, phosphorylation by mTOR leads to its inhibition via targeting to the cytosol allowing a self-regulating feedback mechanism. This chain is E3 ubiquitin-protein ligase ZNRF2 (Znrf2), found in Mus musculus (Mouse).